A 136-amino-acid polypeptide reads, in one-letter code: Large ribosomal subunit protein uL16 (136 aa).

It belongs to the universal ribosomal protein uL16 family. In terms of assembly, part of the 50S ribosomal subunit.

In terms of biological role, binds 23S rRNA and is also seen to make contacts with the A and possibly P site tRNAs. The protein is Large ribosomal subunit protein uL16 of Wigglesworthia glossinidia brevipalpis.